Here is a 256-residue protein sequence, read N- to C-terminus: Non-structural protein 1 (256 aa).

The protein resides in the host cytoplasm. Its subcellular location is the host perinuclear region. Functionally, plays a role in inhibition of the host innate immune system by counteracting the type I interferon signaling. The polypeptide is Non-structural protein 1 (Infectious salmon anemia virus (isolate Atlantic salmon/Norway/810/9/99) (ISAV)).